The primary structure comprises 89 residues: Small ribosomal subunit protein bS16 (89 aa).

The protein belongs to the bacterial ribosomal protein bS16 family.

This chain is Small ribosomal subunit protein bS16, found in Chloroflexus aggregans (strain MD-66 / DSM 9485).